Consider the following 442-residue polypeptide: Putative mannan endo-1,6-alpha-mannosidase C1198.07c (442 aa).

Positions methionine 1–alanine 19 are cleaved as a signal peptide. The Lumenal segment spans residues phenylalanine 20–tryptophan 421. N-linked (GlcNAc...) asparagine glycans are attached at residues asparagine 75, asparagine 124, asparagine 193, asparagine 229, asparagine 254, asparagine 257, and asparagine 356. Residues alanine 422–phenylalanine 442 form a helical membrane-spanning segment.

It belongs to the glycosyl hydrolase 76 family.

It is found in the endoplasmic reticulum membrane. The enzyme catalyses Random hydrolysis of (1-&gt;6)-alpha-D-mannosidic linkages in unbranched (1-&gt;6)-mannans.. The chain is Putative mannan endo-1,6-alpha-mannosidase C1198.07c from Schizosaccharomyces pombe (strain 972 / ATCC 24843) (Fission yeast).